Consider the following 434-residue polypeptide: MARRTDRAPLLDWAEGPGVSPAPETEQGERWAQGYGAAWERRPAGELTPLPQLEDDHIAAVFVVTFDPRSGNIVEWCRPHDIDLEGVEFKSMASGSHRVQSDFIYFRKGGFFGLACFANMPVESELERGARMKSVGVLSPSYTLLYRYMHFLENQVRHQLEIPGHYTPLEAFYEDKKGVLPVGPQTCQPALHWLPPVHKHLYPEMKITHPAGCMSQFIKFFGEQIFVLWKFALLRKRILIFSPPPVGVVCYRVYCCCCLANVTLPGIGATAPESKPFFYVNVADIQTLDGEGSYVACTTEKIFEQKQDLYDVYVDNQNVKTHREHLQPLLRVNSADKEKYQRLNDQRQLLMYSQEVDGDCGSCEEDLFILFFMEQNNRIFQTLLEVASSQDKTLTAEHARSMGLDPHGDRTFLMDLLEVYGFDLMLVIDNPCCP.

Residues 1-29 form a disordered region; that stretch reads MARRTDRAPLLDWAEGPGVSPAPETEQGE. Residues 1–168 form the uDENN domain; the sequence is MARRTDRAPL…QLEIPGHYTP (168 aa). The 148-residue stretch at 194–341 folds into the cDENN domain; it reads LPPVHKHLYP…VNSADKEKYQ (148 aa). Residues 343-434 form the dDENN domain; sequence LNDQRQLLMY…MLVIDNPCCP (92 aa).

It belongs to the DENND11 family.

Probable guanine nucleotide exchange factor (GEF). May promote the exchange of GDP to GTP, converting inactive GDP-bound small GTPases into their active GTP-bound form. This is DENN domain-containing protein 11 (dennd11) from Xenopus laevis (African clawed frog).